The chain runs to 472 residues: 2-methylcitrate synthase, mitochondrial (472 aa).

The transit peptide at 1 to 29 directs the protein to the mitochondrion; that stretch reads MALNLTSSRRALGSLKPLTRAAFSGVRGY. Residues Arg-75 and Lys-193 each coordinate CoA. Oxaloacetate is bound at residue His-271. Leu-306 lines the CoA pocket. His-307 is a catalytic residue. Val-348, Gly-350, and Tyr-351 together coordinate CoA. Residues His-353 and Arg-362 each coordinate oxaloacetate. His-353 is a catalytic residue. 3 residues coordinate CoA: Thr-402, Lys-403, and Asn-408. Residue Asp-410 is part of the active site. Oxaloacetate contacts are provided by Arg-436 and Arg-456.

The protein belongs to the citrate synthase family. As to quaternary structure, homodimer.

It localises to the mitochondrion matrix. It carries out the reaction propanoyl-CoA + oxaloacetate + H2O = (2S,3S)-2-methylcitrate + CoA + H(+). The catalysed reaction is oxaloacetate + acetyl-CoA + H2O = citrate + CoA + H(+). It functions in the pathway organic acid metabolism; propanoate degradation. In terms of biological role, component of the methylcitrate cycle that catalyzes the synthesis of (2S,3S)-2-methylcitrate from propionyl-CoA and oxaloacetate. Plays an important role in detoxification of propionyl-CoA, an inhibitor of both primary and secondary metabolism. Also has citrate synthase activity using as substrates acetyl-CoA and oxaloacetate. The sequence is that of 2-methylcitrate synthase, mitochondrial from Gibberella moniliformis (Maize ear and stalk rot fungus).